A 294-amino-acid chain; its full sequence is Shikimate dehydrogenase (NADP(+)) (294 aa).

Residues 23 to 25 (SRS) and Thr-76 each bind shikimate. Catalysis depends on Lys-80, which acts as the Proton acceptor. Positions 101 and 116 each coordinate shikimate. NADP(+) contacts are provided by residues 141–145 (GAGGA) and Met-233. Tyr-235 is a shikimate binding site. Gly-256 lines the NADP(+) pocket.

The protein belongs to the shikimate dehydrogenase family. As to quaternary structure, homodimer.

It catalyses the reaction shikimate + NADP(+) = 3-dehydroshikimate + NADPH + H(+). The protein operates within metabolic intermediate biosynthesis; chorismate biosynthesis; chorismate from D-erythrose 4-phosphate and phosphoenolpyruvate: step 4/7. Functionally, involved in the biosynthesis of the chorismate, which leads to the biosynthesis of aromatic amino acids. Catalyzes the reversible NADPH linked reduction of 3-dehydroshikimate (DHSA) to yield shikimate (SA). This Methylibium petroleiphilum (strain ATCC BAA-1232 / LMG 22953 / PM1) protein is Shikimate dehydrogenase (NADP(+)).